The primary structure comprises 261 residues: 5'-nucleotidase SurE (261 aa).

Residues Asp-8, Asp-9, Ser-39, and Asn-91 each contribute to the a divalent metal cation site.

Belongs to the SurE nucleotidase family. A divalent metal cation is required as a cofactor.

The protein resides in the cytoplasm. The catalysed reaction is a ribonucleoside 5'-phosphate + H2O = a ribonucleoside + phosphate. Nucleotidase that shows phosphatase activity on nucleoside 5'-monophosphates. This chain is 5'-nucleotidase SurE, found in Polaromonas sp. (strain JS666 / ATCC BAA-500).